The primary structure comprises 143 residues: Anti-sigma F factor (143 aa).

This sequence belongs to the anti-sigma-factor family.

It catalyses the reaction L-seryl-[protein] + ATP = O-phospho-L-seryl-[protein] + ADP + H(+). The catalysed reaction is L-threonyl-[protein] + ATP = O-phospho-L-threonyl-[protein] + ADP + H(+). Its function is as follows. Binds to sigma F and blocks its ability to form an RNA polymerase holoenzyme (E-sigma F). Phosphorylates SpoIIAA on a serine residue. This phosphorylation may enable SpoIIAA to act as an anti-anti-sigma factor that counteracts SpoIIAB and thus releases sigma F from inhibition. This is Anti-sigma F factor from Clostridium acetobutylicum (strain ATCC 824 / DSM 792 / JCM 1419 / IAM 19013 / LMG 5710 / NBRC 13948 / NRRL B-527 / VKM B-1787 / 2291 / W).